Consider the following 446-residue polypeptide: Deoxyguanosinetriphosphate triphosphohydrolase-like protein (446 aa).

Residues Met1–Asp28 form a disordered region. Over residues Gln7–Asp28 the composition is skewed to basic and acidic residues. In terms of domain architecture, HD spans Arg59 to Ala252.

It belongs to the dGTPase family. Type 2 subfamily.

The polypeptide is Deoxyguanosinetriphosphate triphosphohydrolase-like protein (Shewanella sp. (strain MR-7)).